Consider the following 183-residue polypeptide: Streptavidin-V2 (183 aa).

The N-terminal stretch at 1–24 (MRKIVVAAIAVSLTTVGITASASA) is a signal peptide. The Avidin-like domain occupies 37–159 (AEAGITGTWY…GHDTFTKVKP (123 aa)). Biotin-binding residues include Tyr67 and Tyr78. The Cell attachment site; atypical motif lies at 83–85 (RYD). Biotin-binding residues include Trp116, Trp132, and Trp144.

This sequence belongs to the avidin/streptavidin family. In terms of assembly, homotetramer.

It localises to the secreted. In terms of biological role, the biological function of streptavidin is not known. Forms a strong non-covalent specific complex with biotin (one molecule of biotin per subunit of streptavidin). The polypeptide is Streptavidin-V2 (Streptomyces violaceus (Streptomyces venezuelae)).